A 563-amino-acid polypeptide reads, in one-letter code: Cysteine--tRNA ligase, chloroplastic/mitochondrial (563 aa).

Cysteine 91 is a binding site for Zn(2+). Glycine 92 provides a ligand contact to L-cysteine. The 'HIGH' region signature appears at 93 to 103 (VTAYDLSHIGH). Threonine 131 lines the L-cysteine pocket. Positions 136-139 (KIIA) match the 'KIIK' region motif. Residues cysteine 271, histidine 296, and glutamate 300 each contribute to the Zn(2+) site. Histidine 296 contributes to the L-cysteine binding site. The short motif at 328-332 (KMSKS) is the 'KMSKS' region element. Position 331 (lysine 331) interacts with ATP.

The protein belongs to the class-I aminoacyl-tRNA synthetase family. Zn(2+) serves as cofactor.

It is found in the plastid. It localises to the chloroplast. The protein localises to the mitochondrion. The catalysed reaction is tRNA(Cys) + L-cysteine + ATP = L-cysteinyl-tRNA(Cys) + AMP + diphosphate. In terms of biological role, required for female gametophyte development. Is necessary for the fusion of central cell nuclei and programmed cell death (PCD) of the antipodals. The sequence is that of Cysteine--tRNA ligase, chloroplastic/mitochondrial from Arabidopsis thaliana (Mouse-ear cress).